A 679-amino-acid polypeptide reads, in one-letter code: Biosynthetic arginine decarboxylase (679 aa).

The interval 1–43 (MKHRGQEEMGVESTATSDEVVKVPANGNKLEGKNHKQKKLLPT) is disordered. At Lys149 the chain carries N6-(pyridoxal phosphate)lysine. 331–341 (LDVGGGLGVDY) is a substrate binding site.

Belongs to the Orn/Lys/Arg decarboxylase class-II family. SpeA subfamily. Mg(2+) serves as cofactor. Requires pyridoxal 5'-phosphate as cofactor.

The enzyme catalyses L-arginine + H(+) = agmatine + CO2. Catalyzes the biosynthesis of agmatine from arginine. The sequence is that of Biosynthetic arginine decarboxylase from Nostoc sp. (strain PCC 7120 / SAG 25.82 / UTEX 2576).